A 117-amino-acid chain; its full sequence is Acidic phospholipase A2 (117 aa).

Cystine bridges form between cysteine 11/cysteine 70, cysteine 25/cysteine 116, cysteine 27/cysteine 43, cysteine 42/cysteine 98, cysteine 49/cysteine 91, cysteine 59/cysteine 84, and cysteine 77/cysteine 89. 3 residues coordinate Ca(2+): tyrosine 26, glycine 28, and glycine 30. Histidine 46 is an active-site residue. Aspartate 47 contributes to the Ca(2+) binding site. N-linked (GlcNAc...) asparagine glycosylation occurs at asparagine 80. Aspartate 92 is a catalytic residue.

Requires Ca(2+) as cofactor. As to expression, expressed by the venom gland.

It localises to the secreted. The enzyme catalyses a 1,2-diacyl-sn-glycero-3-phosphocholine + H2O = a 1-acyl-sn-glycero-3-phosphocholine + a fatty acid + H(+). Its function is as follows. Snake venom phospholipase A2 (PLA2) that shows strong myotoxicity and induces edema in mice. Shows no cytotoxicity in vitro. Has a strong anticoagulant effect in vitro. PLA2 catalyzes the calcium-dependent hydrolysis of the 2-acyl groups in 3-sn-phosphoglycerides. This is Acidic phospholipase A2 from Micrurus dumerilii (Coral snake).